Reading from the N-terminus, the 313-residue chain is Tyrosine recombinase XerC (313 aa).

The Core-binding (CB) domain maps to 11-97 (NSLQKPLERF…SLRSFFDFLI (87 aa)). The Tyr recombinase domain occupies 118–298 (PLPKNLDVDE…DFQHLAQAYD (181 aa)). Catalysis depends on residues arginine 157, lysine 181, histidine 250, arginine 253, and histidine 276. Residue tyrosine 285 is the O-(3'-phospho-DNA)-tyrosine intermediate of the active site.

The protein belongs to the 'phage' integrase family. XerC subfamily. Forms a cyclic heterotetrameric complex composed of two molecules of XerC and two molecules of XerD.

It localises to the cytoplasm. In terms of biological role, site-specific tyrosine recombinase, which acts by catalyzing the cutting and rejoining of the recombining DNA molecules. The XerC-XerD complex is essential to convert dimers of the bacterial chromosome into monomers to permit their segregation at cell division. It also contributes to the segregational stability of plasmids. The sequence is that of Tyrosine recombinase XerC from Vibrio campbellii (strain ATCC BAA-1116).